The sequence spans 186 residues: MKINGNEIRPGNVIEHEGGLWVAVKTNAVKPGKGGAYNQVELKNLINGTKLNERFRAAETVERVRLEQKDFSFLYEQGEALIFMDTETYEQLELQKDFVGDRAAFLQDGMMVTVELYEEKPIGIRLPDQVTLAITEADPVVKGQTAASSYKPAVLENGIRIPVPPFITSGERVIVDTNELTYISRA.

This sequence belongs to the elongation factor P family.

The protein localises to the cytoplasm. Its pathway is protein biosynthesis; polypeptide chain elongation. Involved in peptide bond synthesis. Stimulates efficient translation and peptide-bond synthesis on native or reconstituted 70S ribosomes in vitro. Probably functions indirectly by altering the affinity of the ribosome for aminoacyl-tRNA, thus increasing their reactivity as acceptors for peptidyl transferase. The sequence is that of Elongation factor P from Brucella ovis (strain ATCC 25840 / 63/290 / NCTC 10512).